The chain runs to 393 residues: NAD(P)H-quinone oxidoreductase subunit H, chloroplastic (393 aa).

The protein belongs to the complex I 49 kDa subunit family. In terms of assembly, NDH is composed of at least 16 different subunits, 5 of which are encoded in the nucleus.

Its subcellular location is the plastid. It localises to the chloroplast thylakoid membrane. It catalyses the reaction a plastoquinone + NADH + (n+1) H(+)(in) = a plastoquinol + NAD(+) + n H(+)(out). The catalysed reaction is a plastoquinone + NADPH + (n+1) H(+)(in) = a plastoquinol + NADP(+) + n H(+)(out). In terms of biological role, NDH shuttles electrons from NAD(P)H:plastoquinone, via FMN and iron-sulfur (Fe-S) centers, to quinones in the photosynthetic chain and possibly in a chloroplast respiratory chain. The immediate electron acceptor for the enzyme in this species is believed to be plastoquinone. Couples the redox reaction to proton translocation, and thus conserves the redox energy in a proton gradient. This is NAD(P)H-quinone oxidoreductase subunit H, chloroplastic from Angiopteris evecta (Mule's foot fern).